We begin with the raw amino-acid sequence, 180 residues long: Segregation and condensation protein B (180 aa).

This sequence belongs to the ScpB family. Homodimer. Homodimerization may be required to stabilize the binding of ScpA to the Smc head domains. Component of a cohesin-like complex composed of ScpA, ScpB and the Smc homodimer, in which ScpA and ScpB bind to the head domain of Smc. The presence of the three proteins is required for the association of the complex with DNA.

It is found in the cytoplasm. Its function is as follows. Participates in chromosomal partition during cell division. May act via the formation of a condensin-like complex containing Smc and ScpA that pull DNA away from mid-cell into both cell halves. In Staphylococcus aureus (strain Mu3 / ATCC 700698), this protein is Segregation and condensation protein B.